We begin with the raw amino-acid sequence, 332 residues long: 2,3-diketo-L-gulonate reductase (332 aa).

The active-site Proton donor is the histidine 44. Residues 168–174 (ITMVDMS), 224–225 (WK), and 304–306 (GHE) contribute to the NAD(+) site.

It belongs to the LDH2/MDH2 oxidoreductase family. DlgD subfamily. Homodimer.

It is found in the cytoplasm. The enzyme catalyses 3-dehydro-L-gulonate + NAD(+) = 2,3-dioxo-L-gulonate + NADH + H(+). The catalysed reaction is 3-dehydro-L-gulonate + NADP(+) = 2,3-dioxo-L-gulonate + NADPH + H(+). In terms of biological role, catalyzes the reduction of 2,3-diketo-L-gulonate in the presence of NADH, to form 3-keto-L-gulonate. In Escherichia coli O127:H6 (strain E2348/69 / EPEC), this protein is 2,3-diketo-L-gulonate reductase.